The chain runs to 157 residues: AM-toxin biosynthesis protein 15 (157 aa).

Positions 17 to 43 (RARHWDSKQGSSNSDVASGGSEVAGNS) are disordered.

The protein operates within mycotoxin biosynthesis. Its function is as follows. Part of the gene clusters that mediate the biosynthesis of AM-toxins, host-selective toxins (HSTs) causing Alternaria blotch on apple, a worldwide distributed disease. AM-toxins are cyclic depsipeptides containing the 3 residues 2-hydroxy-isovaleric acid (2-HIV), dehydroalanine, L-alanine which are common for all 3 AM-toxins I to III. The fourth precursor is L-alpha-amino-methoxyphenyl-valeric acid (L-Amv) for AM-toxin I, L-alpha-amino-phenyl-valeric acid (L-Apv) for AM-toxin II, and L-alpha-amino-hydroxyphenyl-valeric acid (L-Ahv) for AM-toxin III. AM-toxins have two target sites for affecting susceptible apple cells; they cause invagination of the plasma membrane and electrolyte loss and chloroplast disorganization. The non-ribosomal peptide synthetase AMT1 contains 4 catalytic modules and is responsible for activation of each residue in AM-toxin. The aldo-keto reductase AMT2 catalyzes the conversion of 2-keto-isovaleric acid (2-KIV) to 2-hydroxy-isovaleric acid (2-HIV), one of the precursor residues incorporated by AMT1 during AM-toxin biosynthesis, by reduction of its ketone to an alcohol. The cytochrome P450 monooxygenase AMT3 and the thioesterase AMT4 are also important for AM-toxin production, but their exact function within the AM-toxin biosynthesis are not known yet. Up to 21 proteins (including AMT1 to AMT4) are predicted to be involved in AM-toxin biosynthesis since their expression ishighly up-regulated in AM-toxin-producing cultures. This is AM-toxin biosynthesis protein 15 from Alternaria alternata (Alternaria rot fungus).